A 312-amino-acid polypeptide reads, in one-letter code: MECAPPAAGFLYWVGASTIAYLALRASYSLFRAFQVWCVGNEALVGPRLGEWAVVTGGTDGIGKAYAEELAKRGMKIVLISRSQDKLNQVSNNIKEKFNVETRTIAVDFSLDDIYDKIKTGLSGLEIGVLVNNVGMSYEYPEYFLEIPDLDNTIKKLININVLSVCKVTRLVLPGMVERSKGVILNISSASGMLPVPLLTIYSATKAFVDFFSQCLHEEYKSKGIFVQSVMPYLVATKLAKIQKPTLDKPSAETFVKSAIKTVGLQTRTTGYVIHSLMGSINSIMPRWMYFKIIMGFSKSLRNRYLKKRKKN.

The chain crosses the membrane as a helical span at residues 4–24; that stretch reads APPAAGFLYWVGASTIAYLAL. Position 50 to 79 (50 to 79) interacts with NADP(+); that stretch reads GEWAVVTGGTDGIGKAYAEELAKRGMKIVL. 2 helical membrane passes run 182–202 and 269–285; these read GVIL…LTIY and TTGY…NSIM. Ser-189 serves as a coordination point for substrate. Tyr-202 (proton acceptor) is an active-site residue. Positions 308–312 match the Di-lysine motif motif; sequence KRKKN.

It belongs to the short-chain dehydrogenases/reductases (SDR) family. 17-beta-HSD 3 subfamily. Expressed in most tissues tested.

The protein localises to the endoplasmic reticulum membrane. The catalysed reaction is a very-long-chain (3R)-3-hydroxyacyl-CoA + NADP(+) = a very-long-chain 3-oxoacyl-CoA + NADPH + H(+). It catalyses the reaction 17beta-estradiol + NAD(+) = estrone + NADH + H(+). The enzyme catalyses 17beta-estradiol + NADP(+) = estrone + NADPH + H(+). It carries out the reaction 3-oxooctadecanoyl-CoA + NADPH + H(+) = (3R)-hydroxyoctadecanoyl-CoA + NADP(+). The catalysed reaction is (7Z,10Z,13Z,16Z)-3-oxodocosatetraenoyl-CoA + NADPH + H(+) = (3R)-hydroxy-(7Z,10Z,13Z,16Z)-docosatetraenoyl-CoA + NADP(+). It catalyses the reaction 3-oxo-(7Z,10Z,13Z,16Z,19Z)-docosapentaenoyl-CoA + NADPH + H(+) = (3R)-hydroxy-(7Z,10Z,13Z,16Z,19Z)-docosapentaenoyl-CoA + NADP(+). The enzyme catalyses (8Z,11Z,14Z)-3-oxoeicosatrienoyl-CoA + NADPH + H(+) = (3R)-hydroxy-(8Z,11Z,14Z)-eicosatrienoyl-CoA + NADP(+). It participates in lipid metabolism; fatty acid biosynthesis. It functions in the pathway steroid biosynthesis; estrogen biosynthesis. In terms of biological role, catalyzes the second of the four reactions of the long-chain fatty acids elongation cycle. This endoplasmic reticulum-bound enzymatic process, allows the addition of two carbons to the chain of long- and very long-chain fatty acids/VLCFAs per cycle. This enzyme has a 3-ketoacyl-CoA reductase activity, reducing 3-ketoacyl-CoA to 3-hydroxyacyl-CoA, within each cycle of fatty acid elongation. Thereby, it may participate in the production of VLCFAs of different chain lengths that are involved in multiple biological processes as precursors of membrane lipids and lipid mediators. May also catalyze the transformation of estrone (E1) into estradiol (E2) and play a role in estrogen formation. This chain is Very-long-chain 3-oxoacyl-CoA reductase, found in Mus musculus (Mouse).